A 196-amino-acid polypeptide reads, in one-letter code: MRMEVVLVVFLMFIGTINCERLIFNGRPLLHRVTKEETVMLYHELEVAASADEVWSVEGSPELGLHLPDLLPAGIFAKFEITGDGGEGSILDMTFPPGQFPHHYREKFVFFDHKNRYKLVEQIDGDFFDLGVTYYMDTIRVVATGPDSCVIKSTTEYHVKPEFAKIVKPLIDTVPLAIMSEAIAKVVLENKHKSSE.

A signal peptide spans 1-19 (MRMEVVLVVFLMFIGTINC). Dopamine is bound at residue 104 to 106 (YRE). Catalysis depends on lysine 118, which acts as the Proton donor. Position 137 (aspartate 137) interacts with (4-hydroxyphenyl)acetaldehyde.

This sequence belongs to the BetVI family.

It carries out the reaction (4-hydroxyphenyl)acetaldehyde + dopamine = (S)-norcoclaurine + H2O. With respect to regulation, not inhibited by O-phenanthroline or EDTA. In terms of biological role, involved in the biosynthesis of the common precursor of all benzylisoquinoline alkaloids such as morphine, sanguinarine, codeine or berberine. Condenses dopamine and pyruvic acid or 4-hydroxyphenylpyruvate. In Coptis japonica (Japanese goldthread), this protein is S-norcoclaurine synthase 2 (PR10A).